A 303-amino-acid polypeptide reads, in one-letter code: Monoglyceride lipase (303 aa).

The residue at position 10 (Thr-10) is a Phosphothreonine. Tyr-58 bears the 3'-nitrotyrosine mark. The active-site Nucleophile is Ser-122. Catalysis depends on charge relay system residues Asp-239 and His-269.

It belongs to the AB hydrolase superfamily. Monoacylglycerol lipase family. As to quaternary structure, homodimer. As to expression, detected in adipose tissue, lung, liver, kidney, brain and heart.

The protein resides in the cytoplasm. Its subcellular location is the cytosol. It localises to the membrane. It catalyses the reaction Hydrolyzes glycerol monoesters of long-chain fatty acids.. It carries out the reaction a 1-acylglycerol + H2O = glycerol + a fatty acid + H(+). The enzyme catalyses a 2-acylglycerol + H2O = glycerol + a fatty acid + H(+). The catalysed reaction is 1-octanoylglycerol + H2O = octanoate + glycerol + H(+). It catalyses the reaction 2-(5Z,8Z,11Z,14Z-eicosatetraenoyl)-glycerol + H2O = glycerol + (5Z,8Z,11Z,14Z)-eicosatetraenoate + H(+). It carries out the reaction 1-decanoylglycerol + H2O = decanoate + glycerol + H(+). The enzyme catalyses 1-dodecanoylglycerol + H2O = dodecanoate + glycerol + H(+). The catalysed reaction is 1-tetradecanoylglycerol + H2O = tetradecanoate + glycerol + H(+). It catalyses the reaction 2-hexadecanoylglycerol + H2O = glycerol + hexadecanoate + H(+). It carries out the reaction 1-(9Z-octadecenoyl)-glycerol + H2O = glycerol + (9Z)-octadecenoate + H(+). The enzyme catalyses 2-(9Z-octadecenoyl)-glycerol + H2O = glycerol + (9Z)-octadecenoate + H(+). The catalysed reaction is 2-(9Z,12Z-octadecadienoyl)-glycerol + H2O = (9Z,12Z)-octadecadienoate + glycerol + H(+). It catalyses the reaction 1-(5Z,8Z,11Z,14Z-eicosatetraenoyl)-glycerol + H2O = glycerol + (5Z,8Z,11Z,14Z)-eicosatetraenoate + H(+). It carries out the reaction 1-(9Z,12Z-octadecadienoyl)-glycerol + H2O = (9Z,12Z)-octadecadienoate + glycerol + H(+). The enzyme catalyses 1-hexadecanoylglycerol + H2O = glycerol + hexadecanoate + H(+). The catalysed reaction is 1-octadecanoylglycerol + H2O = octadecanoate + glycerol + H(+). It catalyses the reaction prostaglandin E2 1-glyceryl ester + H2O = prostaglandin E2 + glycerol + H(+). It carries out the reaction prostaglandin D2-1-glycerol ester + H2O = prostaglandin D2 + glycerol + H(+). The enzyme catalyses 2-glyceryl-15-deoxy-Delta(12,14)-prostaglandin J2 + H2O = 15-deoxy-Delta(12,14)-prostaglandin J2 + glycerol + H(+). The catalysed reaction is prostaglandin F2alpha 1-glyceryl ester + H2O = prostaglandin F2alpha + glycerol + H(+). It functions in the pathway glycerolipid metabolism; triacylglycerol degradation. Its function is as follows. Converts monoacylglycerides to free fatty acids and glycerol. Hydrolyzes the endocannabinoid 2-arachidonoylglycerol, and thereby contributes to the regulation of endocannabinoid signaling, nociperception and perception of pain. Regulates the levels of fatty acids that serve as signaling molecules and promote cancer cell migration, invasion and tumor growth. This is Monoglyceride lipase from Homo sapiens (Human).